The following is a 172-amino-acid chain: Large ribosomal subunit protein uL5 (172 aa).

Belongs to the universal ribosomal protein uL5 family. As to quaternary structure, part of the 50S ribosomal subunit; contacts the 5S rRNA and probably tRNA. Forms a bridge to the 30S subunit in the 70S ribosome.

In terms of biological role, this is one of the proteins that bind and probably mediate the attachment of the 5S RNA into the large ribosomal subunit, where it forms part of the central protuberance. In the 70S ribosome it contacts protein S13 of the 30S subunit (bridge B1b), connecting the 2 subunits; this bridge is implicated in subunit movement. May contact the P site tRNA; the 5S rRNA and some of its associated proteins might help stabilize positioning of ribosome-bound tRNAs. This Haloferax mediterranei (strain ATCC 33500 / DSM 1411 / JCM 8866 / NBRC 14739 / NCIMB 2177 / R-4) (Halobacterium mediterranei) protein is Large ribosomal subunit protein uL5.